Reading from the N-terminus, the 132-residue chain is Salivary protein 15 Iper-2 (132 aa).

Positions 1-18 are cleaved as a signal peptide; it reads MKVVCIIVLFVIVAVNES. N-linked (GlcNAc...) asparagine glycans are attached at residues Asn24, Asn36, Asn62, Asn89, and Asn101. Positions 113–132 are CD4-binding; sequence GPNGQTCADKSQCVGHIPGC.

Belongs to the salp15 family. Interacts with host CD4. Interacts with host DC-SIGN (CD209). In terms of assembly, (Microbial infection) Interacts with Borrelia outer surface protein C (OspC). Expressed in salivary glands from feeding female ticks. Highly expressed 1 day after start of feeding, and weakly expressed at the initiation of feeding and 4 days after start of feeding.

The protein resides in the secreted. Functionally, salivary tick protein that downregulates host immune system by binding to both dendritic cells, and CD4(+) T cells. Specifically binds to the CD4 coreceptor on T cells. This interaction prevents the activation of the Src kinase, Lck, and its downstream substrate Zap-70, and results in deficient activation of PLCgamma1, the repression of calcium fluxes triggered by T-cell antigen receptor (TCR) ligation, and a subsequent reduction in interleukin-2 production. This salivary protein also binds to DC-SIGN (CD209) on dendritic cells (DC) and activates the Raf-1 kinase/MEK signaling pathway that results in down-regulating expression of pro-inflammatory cytokines. Furthermore, it inhibits T cell proliferation induced by DCs. It also inhibits in vitro keratinocyte inflammation induced by Borrelia burgdorferi or by the major outer surface protein (OspC) of Borrelia. In addition, it downregulates chemokines and monocyte chemoattractant protein 1, as well as several antimicrobial peptides such as defensins, cathelicidin, psoriasin, and RNase 7. Apart from its immunomodulatory activities, it is also associated with protection of Borrelia spirochetes from antibody-mediated killing through its binding to OspC. In vivo, tests on different immune disease animal models show promising therapeutic results, e.g., in inhibiting HIV infection, experimental autoimmune encephalomyelitis, transplantation rejection, and asthma. (Microbial infection) Protects Borrelia garinii from anti-Borrelia antibody-mediated cytotoxicity in vitro. May facilitate B.garinii transmission in mouse model. In terms of biological role, (Microbial infection) Protects Borrelia burgdorferi from anti-Borrelia antibody-mediated cytotoxicity in vitro. Its function is as follows. (Microbial infection) Protects Borrelia afzelii from anti-Borrelia antibody-mediated cytotoxicity in vitro. The protein is Salivary protein 15 Iper-2 of Ixodes persulcatus (Taiga tick).